Reading from the N-terminus, the 158-residue chain is Cyclic pyranopterin monophosphate synthase (158 aa).

Residues 75–77 and 113–114 each bind substrate; these read LCH and ME. Asp-128 is a catalytic residue.

It belongs to the MoaC family. Homohexamer; trimer of dimers.

The enzyme catalyses (8S)-3',8-cyclo-7,8-dihydroguanosine 5'-triphosphate = cyclic pyranopterin phosphate + diphosphate. It participates in cofactor biosynthesis; molybdopterin biosynthesis. In terms of biological role, catalyzes the conversion of (8S)-3',8-cyclo-7,8-dihydroguanosine 5'-triphosphate to cyclic pyranopterin monophosphate (cPMP). This chain is Cyclic pyranopterin monophosphate synthase, found in Acidiphilium cryptum (strain JF-5).